Reading from the N-terminus, the 246-residue chain is Pyridoxine 5'-phosphate synthase (246 aa).

Residue Asn-7 participates in 3-amino-2-oxopropyl phosphate binding. Position 9 to 10 (9 to 10) interacts with 1-deoxy-D-xylulose 5-phosphate; the sequence is DH. Arg-18 contacts 3-amino-2-oxopropyl phosphate. His-43 functions as the Proton acceptor in the catalytic mechanism. Residues Arg-45 and His-50 each contribute to the 1-deoxy-D-xylulose 5-phosphate site. Catalysis depends on Glu-70, which acts as the Proton acceptor. Thr-100 provides a ligand contact to 1-deoxy-D-xylulose 5-phosphate. Residue His-190 is the Proton donor of the active site. Residues Gly-191 and 212 to 213 contribute to the 3-amino-2-oxopropyl phosphate site; that span reads GH.

The protein belongs to the PNP synthase family. Homooctamer; tetramer of dimers.

It is found in the cytoplasm. It carries out the reaction 3-amino-2-oxopropyl phosphate + 1-deoxy-D-xylulose 5-phosphate = pyridoxine 5'-phosphate + phosphate + 2 H2O + H(+). It participates in cofactor biosynthesis; pyridoxine 5'-phosphate biosynthesis; pyridoxine 5'-phosphate from D-erythrose 4-phosphate: step 5/5. In terms of biological role, catalyzes the complicated ring closure reaction between the two acyclic compounds 1-deoxy-D-xylulose-5-phosphate (DXP) and 3-amino-2-oxopropyl phosphate (1-amino-acetone-3-phosphate or AAP) to form pyridoxine 5'-phosphate (PNP) and inorganic phosphate. The polypeptide is Pyridoxine 5'-phosphate synthase (Prochlorococcus marinus (strain SARG / CCMP1375 / SS120)).